The following is a 255-amino-acid chain: Thiazole synthase (255 aa).

Lys-96 functions as the Schiff-base intermediate with DXP in the catalytic mechanism. Residues Gly-157, 183 to 184 (AG), and 205 to 206 (NT) each bind 1-deoxy-D-xylulose 5-phosphate.

This sequence belongs to the ThiG family. As to quaternary structure, homotetramer. Forms heterodimers with either ThiH or ThiS.

Its subcellular location is the cytoplasm. The catalysed reaction is [ThiS sulfur-carrier protein]-C-terminal-Gly-aminoethanethioate + 2-iminoacetate + 1-deoxy-D-xylulose 5-phosphate = [ThiS sulfur-carrier protein]-C-terminal Gly-Gly + 2-[(2R,5Z)-2-carboxy-4-methylthiazol-5(2H)-ylidene]ethyl phosphate + 2 H2O + H(+). Its pathway is cofactor biosynthesis; thiamine diphosphate biosynthesis. Its function is as follows. Catalyzes the rearrangement of 1-deoxy-D-xylulose 5-phosphate (DXP) to produce the thiazole phosphate moiety of thiamine. Sulfur is provided by the thiocarboxylate moiety of the carrier protein ThiS. In vitro, sulfur can be provided by H(2)S. The protein is Thiazole synthase of Staphylococcus saprophyticus subsp. saprophyticus (strain ATCC 15305 / DSM 20229 / NCIMB 8711 / NCTC 7292 / S-41).